The primary structure comprises 1244 residues: MESRKRKSELEHYIDKLTDPPEKQRKMAEFYNSLRMFYKRRWNATLKLPHVQGVEVNLYRLYDTVMALGGWQKVAASDKWSDIAEMFGCKDDILCGDHAIKIIYMRYLSKFEQVETIGDVDDYVDNEMSRSRGRNATSFFATNECPISNNRMVQEYQHRDERGQIINEPDYARLTKSLISGLPNEIDFAMNVCMLLSHAGPKQLRICHAPTLLTLLVAHTGVYDEDDETMADMGKEWKRTTKHNFRDFWASSGVPLDMLMTFLDREIEAEYIDEDDQFFTGVSETFNVKDSRCWRLNQVTTIIRNLSFEPANRVTIVKTWPVMKFLIMCASCKWSPLYVAALDALSNLATDIDLTDKTLVYISQHAILRIITDGIFSLDKFKLVRSLEILTGLCGFEGNEAIICDWLNSATIAHIFEVVGVKDIMMCVYTLECLYQISEMGDTACDLISESPKAIQQLVSMATLEAVSFGPAGLAGMKVVEYQPSFTQGSNQQQNPHHSQGGHQLGHSNVRMGGLNHNQHHQQIGPPGAPGAAPMTVRQVIQNNLALQQVQRENLNREQYSTQSSQPHPPHTNVPPSPSILAHHSSGLVQQNGMKFDRRTGNLPVRPIAPSTNSGESQLEQLTEKWIRQNCVFEPAMSTPRGELYAAYVDDLRNLYHSMSGSLAMFSGVMKNLYPDVNFRMAQNGIMIVAQGIRLIRPHRLAPAASQSASESHPLMKKMLTSEPKEENGVLINGHAVQESGAERIIKTEPIRTDEPSVLIESQEQSVPKKQNDINGEETDEVELNSKIVTPEKKSITNGTVEVCQEPIQASKLFDENYANQIEGSEVSIEIREQFVNDTDNVKLESEKINGIICNGNSKVKKESMASRAAHIVAVAAACNGDLERMNVVSNGNDIEKEIEKETEKVEEETNEEKNKEVVETEVVDDAQESEKRKCVPPSSNPTDYMCDWDCCSIYYASPSHVLKHLSEEHVAEELRLLCRWNGCADPTPRNRWSLITHIQDSHCNEAQLKAASQKRKEGGGIAPVRGAPRAEVISRDINNHPGYAKNAAFDAIRRHAFNFLSRELTDEAEGPVTKSIRLTSCLILRNLARYSAEGRQKLRRHESHICWLALSRLESAHALSQLLSELHQAPAAEEEQQKMLSEVPSSASLSSMAGSSSQLPTVPDSPTSSVASAPMKESTSVSNKPTVHINRMLNFSSLNEKTPTSPQFTAGSSPHRHQPIQQHIPSQPSPLVQTTPVRAGAGI.

The ARID domain occupies 24–116 (QRKMAEFYNS…YLSKFEQVET (93 aa)). Over residues 486–496 (FTQGSNQQQNP) the composition is skewed to polar residues. Disordered stretches follow at residues 486–534 (FTQG…GAAP), 556–583 (NREQ…ILAH), and 597–619 (DRRT…ESQL). Residues 497-508 (HHSQGGHQLGHS) show a composition bias toward low complexity. Positions 556-566 (NREQYSTQSSQ) are enriched in polar residues. Positions 567-578 (PHPPHTNVPPSP) are enriched in pro residues. Residues 610 to 619 (PSTNSGESQL) show a composition bias toward polar residues. Positions 623–697 (TEKWIRQNCV…IVAQGIRLIR (75 aa)) form a DNA-binding region, RFX-type winged-helix. A disordered region spans residues 1134-1244 (EEEQQKMLSE…TTPVRAGAGI (111 aa)). Residues 1142 to 1158 (SEVPSSASLSSMAGSSS) show a composition bias toward low complexity. Composition is skewed to polar residues over residues 1159-1186 (QLPT…SNKP) and 1194-1212 (LNFS…FTAG). A compositionally biased stretch (low complexity) spans 1220–1231 (PIQQHIPSQPSP).

Component of the SWI/SNF-B (PBAF) chromatin remodeling complex.

The protein resides in the nucleus. In terms of biological role, involved in transcriptional activation and repression of select genes by chromatin remodeling (alteration of DNA-nucleosome topology). Required for the stability of the SWI/SNF chromatin remodeling complex SWI/SNF-B (PBAF). Required for regulation of a stress response gene network, probably as part of the PBAF complex and perhaps acting in concert with histone demethylase jmjc-1. Binds to the ethanol and stress response elements (ESRE) in the promoter regions of hsp-16.1 and hsp-16.2, probably as part of the PBAF complex. In Caenorhabditis elegans, this protein is SWI/SNF chromatin remodeling complex subunit swsn-7.